The following is a 286-amino-acid chain: MRISLACLAALCALPAGVMAQDASVHDKPAVRGSIIANLLQDHDNPFLLYPYESNYLLYTWTSDLNKEAIRSYDWAENARKDEVKFQLSLAFPLWRGILGDNSLLGASYTQKSWWQLSNSKESAPFRETNYEPQLFLGFATDYQFAGWTLRDIEMGYNHDSNGRSDPTSRSWNRLYARLMAQNGNWLVEVKPWYVVGSTDDNPDITKYMGYYRLKVGYQLGEAILSAQGQYNWNTGYGGAELGVSYPITKHVRAYTQIYSGYGESLIDYNFNQTRVGVGLMLNDLF.

Positions 1 to 20 (MRISLACLAALCALPAGVMA) are cleaved as a signal peptide. The Periplasmic portion of the chain corresponds to 21-49 (QDASVHDKPAVRGSIIANLLQDHDNPFLL). Residues 50–62 (YPYESNYLLYTWT) form a beta stranded membrane-spanning segment. At 63-81 (SDLNKEAIRSYDWAENARK) the chain is on the extracellular side. Residues 82–96 (DEVKFQLSLAFPLWR) form a beta stranded membrane-spanning segment. Residues 97-102 (GILGDN) are Periplasmic-facing. A beta stranded transmembrane segment spans residues 103-115 (SLLGASYTQKSWW). The Extracellular portion of the chain corresponds to 116 to 125 (QLSNSKESAP). Ca(2+) is bound at residue serine 123. The chain crosses the membrane as a beta stranded span at residues 126–145 (FRETNYEPQLFLGFATDYQF). The Periplasmic portion of the chain corresponds to 146 to 147 (AG). Residues 148 to 161 (WTLRDIEMGYNHDS) traverse the membrane as a beta stranded segment. Histidine 159 (proton acceptor) is an active-site residue. Serine 161 functions as the Nucleophile in the catalytic mechanism. The Extracellular portion of the chain corresponds to 162–170 (NGRSDPTSR). Residues arginine 164 and serine 169 each contribute to the Ca(2+) site. The beta stranded transmembrane segment at 171–183 (SWNRLYARLMAQN) threads the bilayer. The Periplasmic segment spans residues 184–185 (GN). A beta stranded membrane pass occupies residues 186–195 (WLVEVKPWYV). Topologically, residues 196–213 (VGSTDDNPDITKYMGYYR) are extracellular. Residue aspartate 201 participates in Ca(2+) binding. Residues 214-220 (LKVGYQL) form a beta stranded membrane-spanning segment. The Periplasmic portion of the chain corresponds to 221 to 222 (GE). Residues 223-231 (AILSAQGQY) traverse the membrane as a beta stranded segment. Residues 232-238 (NWNTGYG) are Extracellular-facing. Residues 239 to 247 (GAELGVSYP) form a beta stranded membrane-spanning segment. Topologically, residues 248-252 (ITKHV) are periplasmic. Residues 253 to 262 (RAYTQIYSGY) traverse the membrane as a beta stranded segment. The Extracellular segment spans residues 263 to 271 (GESLIDYNF). The chain crosses the membrane as a beta stranded span at residues 272-283 (NQTRVGVGLMLN). The Periplasmic portion of the chain corresponds to 284–286 (DLF).

This sequence belongs to the phospholipase A1 family. As to quaternary structure, homodimer; dimerization is reversible, and the dimeric form is the active one. It depends on Ca(2+) as a cofactor.

It is found in the cell outer membrane. The catalysed reaction is a 1,2-diacyl-sn-glycero-3-phosphocholine + H2O = a 2-acyl-sn-glycero-3-phosphocholine + a fatty acid + H(+). It catalyses the reaction a 1,2-diacyl-sn-glycero-3-phosphocholine + H2O = a 1-acyl-sn-glycero-3-phosphocholine + a fatty acid + H(+). In terms of biological role, hydrolysis of phosphatidylcholine with phospholipase A2 (EC 3.1.1.4) and phospholipase A1 (EC 3.1.1.32) activities. This Klebsiella pneumoniae protein is Phospholipase A1 (pldA).